Consider the following 209-residue polypeptide: Uracil phosphoribosyltransferase (209 aa).

5-phospho-alpha-D-ribose 1-diphosphate is bound by residues Arg-79, Arg-104, and 131–139; that span reads DPMLATGGS. Residues Ile-194 and 199–201 each bind uracil; that span reads GDA. 5-phospho-alpha-D-ribose 1-diphosphate is bound at residue Asp-200.

Belongs to the UPRTase family. Mg(2+) serves as cofactor.

The enzyme catalyses UMP + diphosphate = 5-phospho-alpha-D-ribose 1-diphosphate + uracil. The protein operates within pyrimidine metabolism; UMP biosynthesis via salvage pathway; UMP from uracil: step 1/1. With respect to regulation, allosterically activated by GTP. Its function is as follows. Catalyzes the conversion of uracil and 5-phospho-alpha-D-ribose 1-diphosphate (PRPP) to UMP and diphosphate. The chain is Uracil phosphoribosyltransferase from Lactobacillus gasseri (strain ATCC 33323 / DSM 20243 / BCRC 14619 / CIP 102991 / JCM 1131 / KCTC 3163 / NCIMB 11718 / NCTC 13722 / AM63).